Reading from the N-terminus, the 605-residue chain is Adenine deaminase (605 aa).

It belongs to the metallo-dependent hydrolases superfamily. Adenine deaminase family. Mn(2+) serves as cofactor.

It catalyses the reaction adenine + H2O + H(+) = hypoxanthine + NH4(+). This Mesorhizobium japonicum (strain LMG 29417 / CECT 9101 / MAFF 303099) (Mesorhizobium loti (strain MAFF 303099)) protein is Adenine deaminase.